The primary structure comprises 131 residues: MPEETLLAFDFGEKKIGIAIGNTLTRQARPLEIIFSEIREARFARIGQLLQQWQPQRVVVGLALASDGGEQPATARCRRFANQLRGRYGLAVELVDERGSSMEAQRLLGTHAPDDAVAAAVILQRYLDALP.

The protein belongs to the YqgF nuclease family.

The protein localises to the cytoplasm. Its function is as follows. Could be a nuclease involved in processing of the 5'-end of pre-16S rRNA. The chain is Putative pre-16S rRNA nuclease from Bordetella petrii (strain ATCC BAA-461 / DSM 12804 / CCUG 43448).